Reading from the N-terminus, the 69-residue chain is Conotoxin Eb6.22 (69 aa).

The signal sequence occupies residues 1 to 17 (VLIIAVLFLTACQLTTA). The propeptide occupies 18–41 (ETYSRGRQKHRARRSTDKNSKWTR). 3 disulfide bridges follow: C43–C57, C50–C61, and C56–C68.

Belongs to the conotoxin O1 superfamily. Expressed by the venom duct.

It is found in the secreted. This chain is Conotoxin Eb6.22 (E1), found in Conus ebraeus (Hebrew cone).